Reading from the N-terminus, the 553-residue chain is Flagellar hook-associated protein 1 (553 aa).

The protein belongs to the flagella basal body rod proteins family.

It is found in the secreted. The protein localises to the bacterial flagellum. The chain is Flagellar hook-associated protein 1 (flgK) from Salmonella typhi.